A 457-amino-acid polypeptide reads, in one-letter code: Phosphomethylpyrimidine synthase (457 aa).

Residues Asn88, Met117, Tyr146, His182, 204–206 (SRG), 245–248 (DACR), and Glu284 contribute to the substrate site. His288 serves as a coordination point for Zn(2+). A substrate-binding site is contributed by Tyr311. His352 is a binding site for Zn(2+). The [4Fe-4S] cluster site is built by Cys428, Cys431, and Cys435.

The protein belongs to the ThiC family. [4Fe-4S] cluster serves as cofactor.

It catalyses the reaction 5-amino-1-(5-phospho-beta-D-ribosyl)imidazole + S-adenosyl-L-methionine = 4-amino-2-methyl-5-(phosphooxymethyl)pyrimidine + CO + 5'-deoxyadenosine + formate + L-methionine + 3 H(+). It functions in the pathway cofactor biosynthesis; thiamine diphosphate biosynthesis. In terms of biological role, catalyzes the synthesis of the hydroxymethylpyrimidine phosphate (HMP-P) moiety of thiamine from aminoimidazole ribotide (AIR) in a radical S-adenosyl-L-methionine (SAM)-dependent reaction. The chain is Phosphomethylpyrimidine synthase from Clostridium tetani (strain Massachusetts / E88).